Consider the following 274-residue polypeptide: Diaminopimelate epimerase (274 aa).

The substrate site is built by asparagine 11, glutamine 44, and asparagine 64. Residue cysteine 73 is the Proton donor of the active site. Residues 74–75 (GN), asparagine 157, asparagine 190, and 208–209 (ER) contribute to the substrate site. Cysteine 217 serves as the catalytic Proton acceptor. 218 to 219 (GS) contributes to the substrate binding site.

This sequence belongs to the diaminopimelate epimerase family. In terms of assembly, homodimer.

It localises to the cytoplasm. The enzyme catalyses (2S,6S)-2,6-diaminopimelate = meso-2,6-diaminopimelate. It participates in amino-acid biosynthesis; L-lysine biosynthesis via DAP pathway; DL-2,6-diaminopimelate from LL-2,6-diaminopimelate: step 1/1. Its function is as follows. Catalyzes the stereoinversion of LL-2,6-diaminopimelate (L,L-DAP) to meso-diaminopimelate (meso-DAP), a precursor of L-lysine and an essential component of the bacterial peptidoglycan. The chain is Diaminopimelate epimerase from Yersinia pseudotuberculosis serotype O:1b (strain IP 31758).